Here is a 471-residue protein sequence, read N- to C-terminus: Methylenetetrahydrofolate--tRNA-(uracil-5-)-methyltransferase TrmFO (471 aa).

13 to 18 (GGGLAG) contacts FAD.

The protein belongs to the MnmG family. TrmFO subfamily. It depends on FAD as a cofactor.

It is found in the cytoplasm. The enzyme catalyses uridine(54) in tRNA + (6R)-5,10-methylene-5,6,7,8-tetrahydrofolate + NADH + H(+) = 5-methyluridine(54) in tRNA + (6S)-5,6,7,8-tetrahydrofolate + NAD(+). The catalysed reaction is uridine(54) in tRNA + (6R)-5,10-methylene-5,6,7,8-tetrahydrofolate + NADPH + H(+) = 5-methyluridine(54) in tRNA + (6S)-5,6,7,8-tetrahydrofolate + NADP(+). Catalyzes the folate-dependent formation of 5-methyl-uridine at position 54 (M-5-U54) in all tRNAs. The sequence is that of Methylenetetrahydrofolate--tRNA-(uracil-5-)-methyltransferase TrmFO from Azorhizobium caulinodans (strain ATCC 43989 / DSM 5975 / JCM 20966 / LMG 6465 / NBRC 14845 / NCIMB 13405 / ORS 571).